The primary structure comprises 381 residues: Pre-mRNA-splicing factor cwf28 (381 aa).

Positions 1–21 are disordered; that stretch reads MKRKAVLEAFSDSEDEDEKKL. 2 positions are modified to phosphoserine: S11 and S13. Positions 104–157 form a coiled coil; it reads AADNEIVDWKANNSNEKAQNKIATNKESTDILPEEVQLVLNDLNDDVKSANSAN. The segment at 262 to 381 is disordered; that stretch reads LNSQNEHTEV…DRSYRSTRTL (120 aa). Over residues 274–285 the composition is skewed to polar residues; the sequence is KSNSIDNLTPSS. S275 and S277 each carry phosphoserine. Composition is skewed to basic and acidic residues over residues 287 to 297, 306 to 332, and 362 to 375; these read LFRKRSRDNNL, KHLD…EYHS, and SDRY…DRSY.

This sequence belongs to the SPP2 family. Belongs to the 40S cdc5-associated complex (or cwf complex), a spliceosome sub-complex reminiscent of a late-stage spliceosome composed of the U2, U5 and U6 snRNAs and at least brr2, cdc5, cwf2/prp3, cwf3/syf1, cwf4/syf3, cwf5/ecm2, spp42/cwf6, cwf7/spf27, cwf8, cwf9, cwf10, cwf11, cwf12, prp45/cwf13, cwf14, cwf15, cwf16, cwf17, cwf18, cwf19, cwf20, cwf21, cwf22, cwf23, cwf24, cwf25, cwf26, cyp7/cwf27, cwf28, cwf29/ist3, lea1, msl1, prp5/cwf1, prp10, prp12/sap130, prp17, prp22, sap61, sap62, sap114, sap145, slu7, smb1, smd1, smd3, smf1, smg1 and syf2.

The protein resides in the nucleus. Functionally, involved in spliceosome maturation and the first step of pre-mRNA splicing. The protein is Pre-mRNA-splicing factor cwf28 (cwf28) of Schizosaccharomyces pombe (strain 972 / ATCC 24843) (Fission yeast).